The following is a 469-amino-acid chain: Glutamate--tRNA ligase (469 aa).

The 'HIGH' region signature appears at 10–20 (PSPTGYLHVGG). Residues Cys99, Cys101, Cys126, and Asp128 each contribute to the Zn(2+) site. Residues 238–242 (RLSKR) carry the 'KMSKS' region motif. Lys241 contacts ATP.

Belongs to the class-I aminoacyl-tRNA synthetase family. Glutamate--tRNA ligase type 1 subfamily. Monomer. Zn(2+) is required as a cofactor.

The protein resides in the cytoplasm. It catalyses the reaction tRNA(Glu) + L-glutamate + ATP = L-glutamyl-tRNA(Glu) + AMP + diphosphate. Catalyzes the attachment of glutamate to tRNA(Glu) in a two-step reaction: glutamate is first activated by ATP to form Glu-AMP and then transferred to the acceptor end of tRNA(Glu). The sequence is that of Glutamate--tRNA ligase from Pelobacter propionicus (strain DSM 2379 / NBRC 103807 / OttBd1).